Here is a 663-residue protein sequence, read N- to C-terminus: 4-hydroxy-3-methylbut-2-en-1-yl diphosphate synthase (flavodoxin) (663 aa).

The [4Fe-4S] cluster site is built by cysteine 568, cysteine 571, cysteine 602, and glutamate 609.

It belongs to the IspG family. [4Fe-4S] cluster is required as a cofactor.

The enzyme catalyses (2E)-4-hydroxy-3-methylbut-2-enyl diphosphate + oxidized [flavodoxin] + H2O + 2 H(+) = 2-C-methyl-D-erythritol 2,4-cyclic diphosphate + reduced [flavodoxin]. Its pathway is isoprenoid biosynthesis; isopentenyl diphosphate biosynthesis via DXP pathway; isopentenyl diphosphate from 1-deoxy-D-xylulose 5-phosphate: step 5/6. Converts 2C-methyl-D-erythritol 2,4-cyclodiphosphate (ME-2,4cPP) into 1-hydroxy-2-methyl-2-(E)-butenyl 4-diphosphate. This Leptospira interrogans serogroup Icterohaemorrhagiae serovar copenhageni (strain Fiocruz L1-130) protein is 4-hydroxy-3-methylbut-2-en-1-yl diphosphate synthase (flavodoxin).